The sequence spans 66 residues: Ocellatin-PT5 (66 aa).

The first 22 residues, 1–22 (MAFLKKSLFLVLFLGLVSLSIC), serve as a signal peptide directing secretion. Residues 23 to 39 (DEEKRQDEDDDDDDDEE) constitute a propeptide that is removed on maturation. Valine 66 bears the Valine amide mark.

In terms of tissue distribution, expressed by the skin glands.

The protein localises to the secreted. Functionally, has antibacterial activity against Gram-negative bacterium E.coli ATCC 25922 (MIC=300 uM) but not against S.pneumoniae ATCC 700603, S.choleraesuis ATCC 14028 or Gram-positive bacterium S.aureus ATCC 29313. Shows very little hemolytic activity and no cytotoxicity. The sequence is that of Ocellatin-PT5 from Leptodactylus pustulatus (Ceara white-lipped frog).